The following is a 620-amino-acid chain: Glutathione-regulated potassium-efflux system protein KefC (620 aa).

Residues 1 to 3 (MDS) lie on the Periplasmic side of the membrane. The helical transmembrane segment at 4-24 (HTLLQALIYLGSAALIVPIAV) threads the bilayer. Position 25 (Arg-25) is a topological domain, cytoplasmic. A helical transmembrane segment spans residues 26 to 46 (LGLGSVLGYLIAGCIIGPWGL). The Periplasmic portion of the chain corresponds to 47–53 (RLVTDAE). Residues 54–74 (SILHFAEIGVVLMLFVIGLEL) traverse the membrane as a helical segment. Topologically, residues 75–89 (DPQRLWKLRASVFGG) are cytoplasmic. Residues 90 to 110 (GALQMGVCGGLIGLFCMFLGL) form a helical membrane-spanning segment. The Periplasmic segment spans residues 111-113 (RWQ). Residues 114-134 (VAELIGMTLALSSTAIAMQAM) form a helical membrane-spanning segment. Over 135 to 148 (NERNLTVSQVGRSA) the chain is Cytoplasmic. The chain crosses the membrane as a helical span at residues 149-169 (FAVLLFQDIAAIPLVAMIPLL). Topologically, residues 170 to 177 (AASGASTT) are periplasmic. A helical membrane pass occupies residues 178-198 (LGAFALSALKVAGALALVVLL). Residues 199–213 (GRYVTRPALRFVARS) are Cytoplasmic-facing. Residues 214 to 233 (GLREVFSAVALFLVFGFGLL) form a helical membrane-spanning segment. The Periplasmic portion of the chain corresponds to 234 to 236 (LEE). Residues 237-254 (VGLSMAMGAFLAGVLLAS) form a helical membrane-spanning segment. Residues 255–269 (SEYRHALESDIEPFK) are Cytoplasmic-facing. The chain crosses the membrane as a helical span at residues 270-290 (GLLLGLFFIGVGMSIDFGTLV). The Periplasmic portion of the chain corresponds to 291-293 (ENP). The helical transmembrane segment at 294–314 (LRILLLLAGFLAIKIVMLWLV) threads the bilayer. Residues 315-326 (ARPLGVPAKQRR) lie on the Cytoplasmic side of the membrane. A helical transmembrane segment spans residues 327-347 (WFAVLLGQGSEFAFVVFGAAQ). Over 348–358 (MADVLEPEWAK) the chain is Periplasmic. Residues 359-379 (ALTLAVALSMAATPIFLVLLT) traverse the membrane as a helical segment. The Cytoplasmic portion of the chain corresponds to 380-620 (RMEKTATGEA…ADEPEVKPSI (241 aa)). The RCK N-terminal domain maps to 399–518 (QPRVIVAGFG…AGVAMPERET (120 aa)). A disordered region spans residues 599-620 (QGTAEGKHSGEVADEPEVKPSI).

It belongs to the monovalent cation:proton antiporter 2 (CPA2) transporter (TC 2.A.37) family. KefC subfamily. As to quaternary structure, homodimer. Interacts with the regulatory subunit KefF.

It localises to the cell inner membrane. Functionally, pore-forming subunit of a potassium efflux system that confers protection against electrophiles. Catalyzes K(+)/H(+) antiport. The sequence is that of Glutathione-regulated potassium-efflux system protein KefC from Salmonella typhimurium (strain LT2 / SGSC1412 / ATCC 700720).